Reading from the N-terminus, the 184-residue chain is Mitochondrial import inner membrane translocase subunit Tim22 (184 aa).

2 disulfide bridges follow: C59–C131 and C150–C169. Helical transmembrane passes span 64 to 84 (ALAC…TAGI), 115 to 133 (YAKN…ECLV), and 160 to 180 (AGLK…AVID).

It belongs to the Tim17/Tim22/Tim23 family. Core component of the TIM22 complex.

The protein resides in the mitochondrion inner membrane. Functionally, essential core component of the TIM22 complex, a complex that mediates the import and insertion of multi-pass transmembrane proteins into the mitochondrial inner membrane. In the TIM22 complex, it constitutes the voltage-activated and signal-gated channel. Forms a twin-pore translocase that uses the membrane potential as external driving force in 2 voltage-dependent steps. The polypeptide is Mitochondrial import inner membrane translocase subunit Tim22 (timm22) (Xenopus laevis (African clawed frog)).